Reading from the N-terminus, the 200-residue chain is dITP/XTP pyrophosphatase (200 aa).

8-13 (TGNQGK) provides a ligand contact to substrate. Asp69 serves as the catalytic Proton acceptor. Asp69 lines the Mg(2+) pocket. Substrate is bound by residues Ser70, 154-157 (FGYD), Lys177, and 182-183 (HR).

It belongs to the HAM1 NTPase family. In terms of assembly, homodimer. Mg(2+) serves as cofactor.

The catalysed reaction is XTP + H2O = XMP + diphosphate + H(+). It carries out the reaction dITP + H2O = dIMP + diphosphate + H(+). The enzyme catalyses ITP + H2O = IMP + diphosphate + H(+). In terms of biological role, pyrophosphatase that catalyzes the hydrolysis of nucleoside triphosphates to their monophosphate derivatives, with a high preference for the non-canonical purine nucleotides XTP (xanthosine triphosphate), dITP (deoxyinosine triphosphate) and ITP. Seems to function as a house-cleaning enzyme that removes non-canonical purine nucleotides from the nucleotide pool, thus preventing their incorporation into DNA/RNA and avoiding chromosomal lesions. This chain is dITP/XTP pyrophosphatase, found in Vibrio cholerae serotype O1 (strain ATCC 39315 / El Tor Inaba N16961).